The primary structure comprises 217 residues: Octanoyltransferase (217 aa).

One can recognise a BPL/LPL catalytic domain in the interval 35-214; that stretch reads DEAGERIWLL…TLPAFLDKLR (180 aa). Substrate is bound by residues 73 to 80, 145 to 147, and 158 to 160; these read RGGRYTYH, AIG, and GFS. The Acyl-thioester intermediate role is filled by Cys-176.

Belongs to the LipB family.

Its subcellular location is the cytoplasm. The catalysed reaction is octanoyl-[ACP] + L-lysyl-[protein] = N(6)-octanoyl-L-lysyl-[protein] + holo-[ACP] + H(+). It participates in protein modification; protein lipoylation via endogenous pathway; protein N(6)-(lipoyl)lysine from octanoyl-[acyl-carrier-protein]: step 1/2. In terms of biological role, catalyzes the transfer of endogenously produced octanoic acid from octanoyl-acyl-carrier-protein onto the lipoyl domains of lipoate-dependent enzymes. Lipoyl-ACP can also act as a substrate although octanoyl-ACP is likely to be the physiological substrate. This chain is Octanoyltransferase, found in Sphingopyxis alaskensis (strain DSM 13593 / LMG 18877 / RB2256) (Sphingomonas alaskensis).